We begin with the raw amino-acid sequence, 74 residues long: Antimicrobial peptide HsAp1 (74 aa).

Residues 1-21 (MSRRVILTLVLVTILVKTMAG) form the signal peptide. The propeptide occupies 22–33 (MESKKVETTDEI). Pro-65 is subject to Proline amide. A propeptide spanning residues 69 to 74 (AISEQT) is cleaved from the precursor.

It belongs to the non-disulfide-bridged peptide (NDBP) superfamily. Medium-length antimicrobial peptide (group 3) family. As to expression, expressed by the venom gland.

Its subcellular location is the secreted. It localises to the target cell membrane. In terms of biological role, possesses antimicrobial activity against both Gram-negative (MIC=23.8-51.2 uM) and Gram-positive (MIC=11.8-46.5 uM) bacteria, as well as against the fungus C.tropicalis (MIC=48.6 uM). Also possesses a relatively high hemolytic activity. May act by disrupting the integrity of the bacterial cell membrane. This is Antimicrobial peptide HsAp1 from Heterometrus spinifer (Asia giant forest scorpion).